A 314-amino-acid polypeptide reads, in one-letter code: Malate dehydrogenase (314 aa).

Residues 11–16 (GSGNIG) and aspartate 35 each bind NAD(+). Arginine 84 and arginine 90 together coordinate substrate. Residues asparagine 97 and 120-122 (ITN) contribute to the NAD(+) site. Substrate contacts are provided by asparagine 122 and arginine 153. Residue histidine 177 is the Proton acceptor of the active site.

It belongs to the LDH/MDH superfamily. MDH type 3 family.

It carries out the reaction (S)-malate + NAD(+) = oxaloacetate + NADH + H(+). Catalyzes the reversible oxidation of malate to oxaloacetate. The chain is Malate dehydrogenase from Rickettsia canadensis (strain McKiel).